The following is a 664-amino-acid chain: Tripartite terminase subunit 1 (664 aa).

The C3H1-type zinc-finger motif lies at 205-233; the sequence is CHVCFEELCVTANQGATASRRLAGKICDH. Disordered stretches follow at residues 273 to 295 and 440 to 466; these read SKMT…AQER and HAAE…GGPE. Low complexity predominate over residues 281 to 292; it reads GGPAEAPGPAAA.

It belongs to the herpesviridae TRM1 protein family. In terms of assembly, associates with TRM2 and TRM3 to form the tripartite terminase complex. Interacts with portal protein.

The protein localises to the host nucleus. In terms of biological role, component of the molecular motor that translocates viral genomic DNA in empty capsid during DNA packaging. Forms a tripartite terminase complex together with TRM2 and TRM3 in the host cytoplasm. Once the complex reaches the host nucleus, it interacts with the capsid portal vertex. This portal forms a ring in which genomic DNA is translocated into the capsid. TRM1 carries an endonuclease activity that plays an important role for the cleavage of concatemeric viral DNA into unit length genomes. This is Tripartite terminase subunit 1 from Bos taurus (Bovine).